The following is a 395-amino-acid chain: Protein pelota (395 aa).

The short motif at 210 to 212 is the PGF motif element; it reads PGF. Residues 371 to 395 are disordered; the sequence is PELEDSDDDDDEDGAAGGVADSDSD. Over residues 372-384 the composition is skewed to acidic residues; it reads ELEDSDDDDDEDG.

Belongs to the eukaryotic release factor 1 family. Pelota subfamily. In terms of assembly, component of the Pelota-HBS1L complex, also named Dom34-Hbs1 complex, composed of pelo and HBS1. Interacts with Pink1 and Cnot4; the interaction with Cnot4 appears to be Pink1-dependent. A divalent metal cation is required as a cofactor. In terms of tissue distribution, expressed in ovaries and muscles (at protein level). Expressed throughout all development stages.

Its subcellular location is the nucleus. It is found in the cytoplasm. In terms of biological role, component of the Pelota-HBS1L complex, a complex that recognizes stalled ribosomes and triggers the No-Go Decay (NGD) pathway. In the Pelota-HBS1L complex, pelo recognizes ribosomes stalled at the 3' end of an mRNA and engages stalled ribosomes by destabilizing mRNA in the mRNA channel. Following ribosome-binding, the Pelota-HBS1L complex promotes recruitment of pix, which drives the disassembly of stalled ribosomes, followed by degradation of damaged mRNAs as part of the NGD pathway. Required prior to the first meiotic division for spindle formation and nuclear envelope breakdown during spermatogenesis. Together with HBS1, promotes spermatid individualization during spermatogenesis. Required for ovarian germ line stem cell self-renewal and oocyte development during oogenesis. Together with HSB1, required for transposon silencing in the ovary and testis. As part of the Pink1-regulated signaling, is recruited to damaged mitochondrial and is required for recruitment of autophagy receptors and induction of mitophagy. Required for normal eye patterning and for mitotic divisions in the ovary. The protein is Protein pelota (pelo) of Drosophila melanogaster (Fruit fly).